Here is a 109-residue protein sequence, read N- to C-terminus: DNILYSGETLSPGEFLNNGRYVFIMQEDCNLVLYDVDKPIWATNTGGLDRRCHLSMQSDGNLVVYSPRNNPIWASNTGGENGNYVCVLQKDRNVVIYGTARWATGTNIH.

In terms of domain architecture, Bulb-type lectin spans 25-109 (MQEDCNLVLY…ARWATGTNIH (85 aa)). Residues Q26, D28, N30, Y34, D37, K38, W41, A42, N44, Q57, D59, N61, Y65, I72, W73, N76, N83, Q89, D91, N93, Y97, and W102 each coordinate alpha-D-mannopyranose. An intrachain disulfide couples C29 to C52.

As to quaternary structure, homotetramer; antiparallel. As to expression, detected in bulbs (at protein level).

It is found in the secreted. Its activity is regulated as follows. Strongly inhibited by alpha-1,6-linked mannotriose. Inhibited by various oligosaccharides of P.pastoris mannan including, Man(alpha-l,6)Man-alpha-O-Me, Man(alpha-l,2)Man, Man(alpha-l,3)Man-alpha-O-Me, Man(alpha-l,2)Man, alpha-1,2-linked mannotriose, and Man(alpha-1,6)Glc, in order of decreasing potency. Weakly inhibited by elsinotetraose. Not inhibited by maltose or nigerose. Functionally, D-mannose-binding lectin which binds alpha-D-linked mannose. Displays a high affinity for alpha-(1-6)-mannose oligomers. Able to interact with both terminal and internal alpha-D-mannosyl residues. Displays antiviral activity and therefore may contribute to defense against infections. This chain is Mannose-specific lectin, found in Narcissus pseudonarcissus (Daffodil).